The primary structure comprises 712 residues: Asp/Glu-specific dipeptidyl-peptidase (712 aa).

The first 18 residues, 1–18, serve as a signal peptide directing secretion; it reads MKRFFKMALFLGVSALYG. Catalysis depends on charge relay system residues H84, D220, and S647.

The protein belongs to the peptidase S46 family.

Functionally, catalyzes the removal of dipeptides from the N-terminus of oligopeptides. Shows a strict specificity for acidic residues (Asp or Glu) in the P1 position, and has probably a hydrophobic residue preference at the P2 position. Preferentially cleaves the synthetic substrate Leu-Asp-methylcoumaryl-7-amide (Leu-Asp-MCA) as compared to Leu-Glu-MCA. In Capnocytophaga gingivalis, this protein is Asp/Glu-specific dipeptidyl-peptidase (dpp11).